We begin with the raw amino-acid sequence, 370 residues long: 4-hydroxy-3-methylbut-2-en-1-yl diphosphate synthase (flavodoxin) (370 aa).

Residues Cys-268, Cys-271, Cys-303, and Glu-310 each contribute to the [4Fe-4S] cluster site.

Belongs to the IspG family. [4Fe-4S] cluster is required as a cofactor.

The catalysed reaction is (2E)-4-hydroxy-3-methylbut-2-enyl diphosphate + oxidized [flavodoxin] + H2O + 2 H(+) = 2-C-methyl-D-erythritol 2,4-cyclic diphosphate + reduced [flavodoxin]. The protein operates within isoprenoid biosynthesis; isopentenyl diphosphate biosynthesis via DXP pathway; isopentenyl diphosphate from 1-deoxy-D-xylulose 5-phosphate: step 5/6. Functionally, converts 2C-methyl-D-erythritol 2,4-cyclodiphosphate (ME-2,4cPP) into 1-hydroxy-2-methyl-2-(E)-butenyl 4-diphosphate. This is 4-hydroxy-3-methylbut-2-en-1-yl diphosphate synthase (flavodoxin) from Bacillus pumilus (strain SAFR-032).